Consider the following 295-residue polypeptide: ATP synthase gamma chain (295 aa).

Belongs to the ATPase gamma chain family. F-type ATPases have 2 components, CF(1) - the catalytic core - and CF(0) - the membrane proton channel. CF(1) has five subunits: alpha(3), beta(3), gamma(1), delta(1), epsilon(1). CF(0) has three main subunits: a, b and c.

It is found in the cell inner membrane. Functionally, produces ATP from ADP in the presence of a proton gradient across the membrane. The gamma chain is believed to be important in regulating ATPase activity and the flow of protons through the CF(0) complex. This chain is ATP synthase gamma chain, found in Sulfurimonas denitrificans (strain ATCC 33889 / DSM 1251) (Thiomicrospira denitrificans (strain ATCC 33889 / DSM 1251)).